A 354-amino-acid chain; its full sequence is MTTAILERLSTLSVSGQQLRRLPKILEDGLPKMPCTVPETDVPQLFREPYIRTGYRPTGHEWRYYFFSLFQKHNEVVNVWTHLLAALAVLLRFWAFAEAEALPWASTHSLPLLLFILSSITYLTCSLLAHLLQSKSELSHYTFYFVDYVGVSVYQYGSALAHFFYSSDQAWYDRFWLFFLPAAAFCGWLSCAGCCYAKYRYRRPYPVMRKICQVVPAGLAFILDISPVAHRVALCHLAGCQEQAAWYHTLQILFFLVSAYFFSCPVPEKYFPGSCDIVGHGHQIFHAFLSICTLSQLEAILLDYQGRQEIFLQRHGPLSVHMACLSFFFLAACSAATAALLRHKVKARLTKKDS.

Topologically, residues 1–75 (MTTAILERLS…FFSLFQKHNE (75 aa)) are cytoplasmic. Residues 76–96 (VVNVWTHLLAALAVLLRFWAF) traverse the membrane as a helical segment. Topologically, residues 97-111 (AEAEALPWASTHSLP) are extracellular. Residues 112–132 (LLLFILSSITYLTCSLLAHLL) traverse the membrane as a helical segment. At 133–174 (QSKSELSHYTFYFVDYVGVSVYQYGSALAHFFYSSDQAWYDR) the chain is on the cytoplasmic side. The helical transmembrane segment at 175-195 (FWLFFLPAAAFCGWLSCAGCC) threads the bilayer. At 196-213 (YAKYRYRRPYPVMRKICQ) the chain is on the extracellular side. Residues 214–234 (VVPAGLAFILDISPVAHRVAL) traverse the membrane as a helical segment. Residues 235-243 (CHLAGCQEQ) are Cytoplasmic-facing. A helical membrane pass occupies residues 244–264 (AAWYHTLQILFFLVSAYFFSC). Residues 265 to 283 (PVPEKYFPGSCDIVGHGHQ) are Extracellular-facing. The helical transmembrane segment at 284–304 (IFHAFLSICTLSQLEAILLDY) threads the bilayer. The Cytoplasmic portion of the chain corresponds to 305–319 (QGRQEIFLQRHGPLS). The chain crosses the membrane as a helical span at residues 320-340 (VHMACLSFFFLAACSAATAAL). Over 341-354 (LRHKVKARLTKKDS) the chain is Extracellular.

It belongs to the ADIPOR family. Highly expressed in the hypothalamus. Also expressed in spinal cord, kidney and testis.

Its subcellular location is the cell membrane. Its function is as follows. Plasma membrane progesterone (P4) receptor coupled to G proteins. Seems to act through a G(i) mediated pathway. May be involved in oocyte maturation. Also binds dehydroepiandrosterone (DHEA), pregnanolone, pregnenolone and allopregnanolone. This is Membrane progestin receptor beta from Homo sapiens (Human).